The sequence spans 628 residues: Chaperone protein DnaK (628 aa).

Threonine 197 carries the phosphothreonine; by autocatalysis modification. The span at alanine 595 to glycine 604 shows a compositional bias: basic and acidic residues. The interval alanine 595–glutamate 628 is disordered.

It belongs to the heat shock protein 70 family.

Acts as a chaperone. The sequence is that of Chaperone protein DnaK from Aliarcobacter butzleri (strain RM4018) (Arcobacter butzleri).